A 445-amino-acid chain; its full sequence is KICSTOR subunit 2 (445 aa).

The protein belongs to the KICS2 family. Part of the KICSTOR complex composed of KPTN, ITFG2, KICS2 and SZT2. SZT2 probably serves as a link between the other three proteins in the KICSTOR complex and may mediate the direct interaction with the GATOR complex via GATOR1. The KICSTOR complex interacts directly with the GATOR1 complex and most probably indirectly with the GATOR2 complex in an amino acid-independent manner.

Its subcellular location is the lysosome membrane. Its function is as follows. As part of the KICSTOR complex functions in the amino acid-sensing branch of the TORC1 signaling pathway. Recruits, in an amino acid-independent manner, the GATOR1 complex to the lysosomal membranes and allows its interaction with GATOR2 and the RAG GTPases. Functions upstream of the RAG GTPases and is required to negatively regulate mTORC1 signaling in absence of amino acids. In absence of the KICSTOR complex mTORC1 is constitutively localized to the lysosome and activated. The KICSTOR complex is also probably involved in the regulation of mTORC1 by glucose. The protein is KICSTOR subunit 2 of Homo sapiens (Human).